The primary structure comprises 152 residues: Aspartate carbamoyltransferase regulatory chain (152 aa).

Zn(2+) contacts are provided by C108, C113, C136, and C139.

It belongs to the PyrI family. In terms of assembly, contains catalytic and regulatory chains. The cofactor is Zn(2+).

Its function is as follows. Involved in allosteric regulation of aspartate carbamoyltransferase. In Thermococcus kodakarensis (strain ATCC BAA-918 / JCM 12380 / KOD1) (Pyrococcus kodakaraensis (strain KOD1)), this protein is Aspartate carbamoyltransferase regulatory chain.